Reading from the N-terminus, the 206-residue chain is Transmembrane emp24 domain-containing protein bai (206 aa).

The signal sequence occupies residues 1–17 (MAKATFFYFLFIGYVWP). Topologically, residues 18 to 172 (IDSVMFNLAP…RDTNEKTNSR (155 aa)) are lumenal. Residues 30 to 140 (QKCLKEDIQA…LKPLEVDLKR (111 aa)) enclose the GOLD domain. The helical transmembrane segment at 173 to 193 (VLFFSIFSMCCLLGLATWQVL) threads the bilayer. The Cytoplasmic portion of the chain corresponds to 194–206 (YLRRYFKAKKLIE).

The protein belongs to the EMP24/GP25L family.

It is found in the membrane. In terms of biological role, eca and bai are essential, though not redundant, for dorsoventral patterning of the embryo. Specifically required during early embryogenesis for the activity of maternal tkv, while the zygotic tkv is not affected. In Drosophila persimilis (Fruit fly), this protein is Transmembrane emp24 domain-containing protein bai.